We begin with the raw amino-acid sequence, 478 residues long: UDP-glycosyltransferase 90A1 (478 aa).

Residues T289, 343–345 (VDQ), 360–368 (HCGWNSAQE), and 382–385 (MAEQ) each bind UDP-alpha-D-glucose.

The protein belongs to the UDP-glycosyltransferase family.

This Arabidopsis thaliana (Mouse-ear cress) protein is UDP-glycosyltransferase 90A1 (UGT90A1).